Here is a 106-residue protein sequence, read N- to C-terminus: Urease subunit beta (106 aa).

Belongs to the urease beta subunit family. In terms of assembly, heterotrimer of UreA (gamma), UreB (beta) and UreC (alpha) subunits. Three heterotrimers associate to form the active enzyme.

The protein resides in the cytoplasm. It carries out the reaction urea + 2 H2O + H(+) = hydrogencarbonate + 2 NH4(+). The protein operates within nitrogen metabolism; urea degradation; CO(2) and NH(3) from urea (urease route): step 1/1. In Klebsiella pneumoniae (strain 342), this protein is Urease subunit beta.